Reading from the N-terminus, the 395-residue chain is Phosphoglycerate kinase (395 aa).

Substrate contacts are provided by residues 21–23 (DFN), Arg36, 59–62 (HLGR), Arg120, and Arg153. ATP contacts are provided by residues Lys203, Gly294, Glu325, and 351–354 (GGDS).

The protein belongs to the phosphoglycerate kinase family. In terms of assembly, monomer.

The protein resides in the cytoplasm. It catalyses the reaction (2R)-3-phosphoglycerate + ATP = (2R)-3-phospho-glyceroyl phosphate + ADP. It functions in the pathway carbohydrate degradation; glycolysis; pyruvate from D-glyceraldehyde 3-phosphate: step 2/5. This is Phosphoglycerate kinase from Finegoldia magna (strain ATCC 29328 / DSM 20472 / WAL 2508) (Peptostreptococcus magnus).